Reading from the N-terminus, the 2135-residue chain is Nonribosomal peptide synthetase gliP (2135 aa).

Residues 34-424 form an adenylation 1 region; that stretch reads TYTELDVASS…LPADVEEPLR (391 aa). Residues 519 to 594 form the Carrier 1 domain; that stretch reads TEREQVIAEC…GILPYARDLA (76 aa). Residue serine 555 is modified to O-(pantetheine 4'-phosphoryl)serine. A condensation 1 region spans residues 663–913; sequence AEHICNAWRQ…MATLPLVCRI (251 aa). The tract at residues 1078–1458 is adenylation 2; the sequence is YRELDQKSNA…YQEEPRLTQA (381 aa). One can recognise a Carrier 2 domain in the interval 1544–1622; the sequence is ASIADGIATL…EQVELVRRKR (79 aa). Serine 1582 carries the post-translational modification O-(pantetheine 4'-phosphoryl)serine. Residues 1642 to 1905 are condensation 2; sequence SPLERQTWFQ…FLDRLPLRFK (264 aa). One can recognise a Carrier 3 domain in the interval 2061–2134; sequence RRLVGILQRE…DLAQRLYRQV (74 aa). Position 2095 is an O-(pantetheine 4'-phosphoryl)serine (serine 2095).

The protein belongs to the NRP synthetase family.

Its pathway is mycotoxin biosynthesis. Functionally, nonribosomal peptide synthetase; part of the gene cluster that mediates the biosynthesis of gliotoxin, a member of the epipolythiodioxopiperazine (ETP) class of toxins characterized by a disulfide-bridged cyclic dipeptide. The first step in gliotoxin biosynthesis is the condensation of serine and phenylalanine to form the cyclo-L-phenylalanyl-L-serine diketopiperazine (DKP) by the NRPS gliP. GliP is also able to produce the DKP cyclo-L-tryptophanyl-L-serine, suggesting that the substrate specificity of the first adenylation (A) domain in gliP is sufficiently relaxed to accommodate both L-Phe and L-Trp. The cytochrome P450 monooxygenase gliC has been shown to catalyze the subsequent hydroxylation of the alpha-carbon of L-Phe in cyclo-L-phenylalanyl-L-serine whereas the second cytochrome P450 enzyme, gliF, is presumably involved in the modification of the DKP side chain. The glutathione S-transferase (GST) gliG then forms a bis-glutathionylated biosynthetic intermediate which is responsible for the sulfurization of gliotoxin. This bis-glutathionylated intermediate is subsequently processed by the gamma-glutamyl cyclotransferase gliK to remove both gamma-glutamyl moieties. Subsequent processing via gliI yields a biosynthetic intermediate, which is N-methylated via the N-methyltransferase gliN, before the gliotoxin oxidoreductase gliT-mediated disulfide bridge closure. GliN-mediated amide methylation confers stability to ETP, damping the spontaneous formation of tri- and tetrasulfides. Intracellular dithiol gliotoxin oxidized by gliT is subsequently effluxed by gliA. Gliotoxin contributes to pathogenesis during invasive aspergillosis. In macrophages and neutrophils, gliotoxin showed inhibition of various different cell functions including cytokine production, antigen presentation, phagocytosis, and production of reactive oxygen species. The polypeptide is Nonribosomal peptide synthetase gliP (Aspergillus fumigatus (strain ATCC MYA-4609 / CBS 101355 / FGSC A1100 / Af293) (Neosartorya fumigata)).